The primary structure comprises 245 residues: Transcriptional regulatory protein YpdB (245 aa).

Residues 2-116 enclose the Response regulatory domain; it reads KVIIVEDEFL…RITGMLQKLE (115 aa). Position 53 is a 4-aspartylphosphate (Asp53). The HTH LytTR-type domain maps to 140–245; it reads INLVKDERII…VKEFRQLMHL (106 aa).

Post-translationally, phosphorylated by YpdA.

It is found in the cytoplasm. Member of the two-component regulatory system YpdA/YpdB. YpdB regulates expression of yhjX by binding to its promoter region. The sequence is that of Transcriptional regulatory protein YpdB (ypdB) from Escherichia coli O6:H1 (strain CFT073 / ATCC 700928 / UPEC).